Here is a 284-residue protein sequence, read N- to C-terminus: Diaminopimelate epimerase (284 aa).

Substrate-binding residues include Asn20, Gln53, and Asn73. Cys82 functions as the Proton donor in the catalytic mechanism. Residues 83-84 (GN), Asn167, Asn200, and 218-219 (ER) each bind substrate. The active-site Proton acceptor is Cys227. Position 228-229 (228-229 (GS)) interacts with substrate.

The protein belongs to the diaminopimelate epimerase family. In terms of assembly, homodimer.

It is found in the cytoplasm. It carries out the reaction (2S,6S)-2,6-diaminopimelate = meso-2,6-diaminopimelate. It participates in amino-acid biosynthesis; L-lysine biosynthesis via DAP pathway; DL-2,6-diaminopimelate from LL-2,6-diaminopimelate: step 1/1. Catalyzes the stereoinversion of LL-2,6-diaminopimelate (L,L-DAP) to meso-diaminopimelate (meso-DAP), a precursor of L-lysine and an essential component of the bacterial peptidoglycan. This Xanthomonas campestris pv. campestris (strain ATCC 33913 / DSM 3586 / NCPPB 528 / LMG 568 / P 25) protein is Diaminopimelate epimerase.